The primary structure comprises 149 residues: Calmodulin (149 aa).

N-acetylalanine is present on Ala-2. 4 EF-hand domains span residues 8–43, 44–79, 81–116, and 117–149; these read EQIAEFKEAFSLFDKDGDGSITTKELGTVMRSLGQN, PTEAELQDMINEVDADGNGTIDFPEFLNLMARKMKD, DSEEELKEAFKVFDKDQNGYISAADWRHVMTNLGEK, and LTDEEVDEMIREADVDGDGQVNYEEFVKMMMAK. The Ca(2+) site is built by Asp-21, Asp-23, Asp-25, Ser-27, Glu-32, Asp-57, Asp-59, Asn-61, Thr-63, Glu-68, Asp-94, Asp-96, Asn-98, Tyr-100, and Asp-105. Lys-116 is modified (N6,N6,N6-trimethyllysine). Residues Asp-130, Asp-132, Asp-134, Gln-136, and Glu-141 each coordinate Ca(2+).

It belongs to the calmodulin family.

Functionally, calmodulin mediates the control of a large number of enzymes, ion channels and other proteins by Ca(2+). Among the enzymes to be stimulated by the calmodulin-Ca(2+) complex are a number of protein kinases and phosphatases. The chain is Calmodulin from Mougeotia scalaris (Green alga).